A 1264-amino-acid polypeptide reads, in one-letter code: MSILYVSPHPDAFPSLRALIAARYGEAGDGPGWGGPHPRICLQPPPSSRTPFPPPRLPALEQGPGGLWVWGAPAVAQLLWPAGLGGPGGSRAAVLVQQWVSYADTELTPAACGATLPALGLRGPGQDPQAALGALGKALNPLEEWLRLHTYLAGDAPTLADLAAVTALLLPFRYVLDPSARRIWGNVTRWFNTCVRQPEFRAVLGEVVLYSGARSVTQQPGSEITAPQKTAAQLKKEAKKREKLEKFQQKQKTQQQQPAHGEKKPKPEKKEKRDPGVITYDLPTPPGEKKDVSGTMPDSYSPQYVEAAWYPWWERQGFFKPEYGRPSVSAPNPRGVFMMCIPPPNVTGSLHLGHALTNAIQDSLTRWHRMRGETTLWNPGCDHAGIATQVVVEKKLWKERGLNRHQLGREAFLQEVWKWKAEKGDRIYHQLKKLGSSLDWDRACFTMDPKLSATVTEAFVRLHEEGVIYRSTRLVNWSCTLNSAISDIEVDKKELTGRTLLSVPGYKEKVEFGVLVSFAYKVQGSDSDEEVVVATTRIETMLGDVAVAVHPKDPRYQHLKGKSVVHPFLSRSLPIVFDDFVDMEFGTGAVKITPAHDQNDYEVGQRHRLEAISIMDSKGALVNVPPPFLGLPRFEARKAVLAALKEQGLFRGIKDNPMVVPLCNRSKDVVEPLLRPQWYVRCGEMAQAASAAVTRGDLRILPEAHQRTWHSWMDNIRDWCISRQLWWGHRIPAYFITVHDPAVPPGEDPDGRYWVSGRTEAEAREKAAREFGVSPDKISLQQDEDVLDTWFSSGLFPFSIFGWPNQSEDLSVFYPGTLLETGHDILFFWVARMVMLGLKLTEKLPFREVYLHAIVRDAHGRKMSKSLGNVIDPLDVIHGVSLQGLHDQLLNSNLDPSEVEKAKEGQRADFPAGIPECGTDALRFGLCAYTSQGRDINLDVNRILGYRHFCNKLWNATKFALRGLGKGFVPSPTSKPEGHESLVDRWIRSRLAEAVRLSNEGFQAYDFPAVTTAQYSFWLYELCDVYLECLKPVLNGVDQVAADCARQTLYTCLDVGLRLLSPFMPFVTEELFQRLPRRTPNAPASLCVTPYPEPSECSWKDPEAEAALELALSITRAVRSLRADYNLTRTRPDCFLEVADEATGALASAVSAYVQTLASAGVVAVLALGAPAPQGCAVAVASDRCSIHLQLQGLVDPARELGKLQAKRSEAQRQAQRLQERRAASGYSAKVPLEVQEADEVKLQQTEAELRKVDEAIALFQKML.

An N-acetylserine modification is found at S2. The GST C-terminal domain occupies 89–219; the sequence is GSRAAVLVQQ…YSGARSVTQQ (131 aa). Polar residues predominate over residues 218-230; the sequence is QQPGSEITAPQKT. The disordered stretch occupies residues 218–296; it reads QQPGSEITAP…GEKKDVSGTM (79 aa). 2 stretches are compositionally biased toward basic and acidic residues: residues 234 to 248 and 260 to 275; these read LKKE…EKFQ and HGEK…KRDP. The 'HIGH' region motif lies at 344–354; that stretch reads PNVTGSLHLGH. Residues S437 and S527 each carry the phosphoserine modification. Position 645 is an N6-acetyllysine (K645). The 'KMSKS' region motif lies at 862 to 866; it reads KMSKS. K865 is a binding site for ATP.

This sequence belongs to the class-I aminoacyl-tRNA synthetase family. As to quaternary structure, forms high-molecular-mass aggregates with elongation factor 1.

It catalyses the reaction tRNA(Val) + L-valine + ATP = L-valyl-tRNA(Val) + AMP + diphosphate. With respect to regulation, can be regulated by protein kinase C-dependent phosphorylation. The sequence is that of Valine--tRNA ligase (Vars1) from Rattus norvegicus (Rat).